A 56-amino-acid polypeptide reads, in one-letter code: Large ribosomal subunit protein bL33 (56 aa).

Basic and acidic residues predominate over residues 1-12 (MASKGGRDKIKL). Residues 1-30 (MASKGGRDKIKLESTAGTGHFYTTTKNKRT) are disordered. Over residues 15 to 25 (TAGTGHFYTTT) the composition is skewed to polar residues.

Belongs to the bacterial ribosomal protein bL33 family.

This is Large ribosomal subunit protein bL33 from Ralstonia nicotianae (strain ATCC BAA-1114 / GMI1000) (Ralstonia solanacearum).